We begin with the raw amino-acid sequence, 131 residues long: Small ribosomal subunit protein uS11 (131 aa).

This sequence belongs to the universal ribosomal protein uS11 family. Part of the 30S ribosomal subunit. Interacts with proteins S7 and S18. Binds to IF-3.

Functionally, located on the platform of the 30S subunit, it bridges several disparate RNA helices of the 16S rRNA. Forms part of the Shine-Dalgarno cleft in the 70S ribosome. The sequence is that of Small ribosomal subunit protein uS11 from Buchnera aphidicola subsp. Acyrthosiphon pisum (strain 5A).